The primary structure comprises 271 residues: Phosphate import ATP-binding protein PstB (271 aa).

The 242-residue stretch at 25–266 folds into the ABC transporter domain; it reads VDVRQLSLWY…PKHPYTEAYI (242 aa). Residue 57-64 coordinates ATP; the sequence is GPSGCGKS.

This sequence belongs to the ABC transporter superfamily. Phosphate importer (TC 3.A.1.7) family. As to quaternary structure, the complex is composed of two ATP-binding proteins (PstB), two transmembrane proteins (PstC and PstA) and a solute-binding protein (PstS).

It localises to the cell inner membrane. The enzyme catalyses phosphate(out) + ATP + H2O = ADP + 2 phosphate(in) + H(+). Its function is as follows. Part of the ABC transporter complex PstSACB involved in phosphate import. Responsible for energy coupling to the transport system. The sequence is that of Phosphate import ATP-binding protein PstB from Thermus thermophilus (strain ATCC BAA-163 / DSM 7039 / HB27).